The sequence spans 405 residues: GTPase Obg (405 aa).

Residues 1-159 form the Obg domain; that stretch reads MKFVDEVSIF…RDLKLELKVL (159 aa). The tract at residues 127-148 is disordered; it reads NTRFKSSTNRAPRQTTPGKPGD. The segment covering 129–143 has biased composition (polar residues); sequence RFKSSTNRAPRQTTP. In terms of domain architecture, OBG-type G spans 160–333; sequence ADVGLLGLPN…LSQAIMRYLD (174 aa). Residues 166 to 173, 191 to 195, 213 to 216, 283 to 286, and 314 to 316 contribute to the GTP site; these read GLPNAGKS, FTTLV, DIPG, NKAD, and SAL. Serine 173 and threonine 193 together coordinate Mg(2+). The interval 373–405 is disordered; it reads LRRAGVKSVEEADDDDFDDDDDDEGGAEIIYVR. Residues 383 to 398 show a composition bias toward acidic residues; the sequence is EADDDDFDDDDDDEGG.

Belongs to the TRAFAC class OBG-HflX-like GTPase superfamily. OBG GTPase family. In terms of assembly, monomer. The cofactor is Mg(2+).

Its subcellular location is the cytoplasm. Its function is as follows. An essential GTPase which binds GTP, GDP and possibly (p)ppGpp with moderate affinity, with high nucleotide exchange rates and a fairly low GTP hydrolysis rate. Plays a role in control of the cell cycle, stress response, ribosome biogenesis and in those bacteria that undergo differentiation, in morphogenesis control. In Stutzerimonas stutzeri (strain A1501) (Pseudomonas stutzeri), this protein is GTPase Obg.